The sequence spans 300 residues: Dihydroorotate dehydrogenase B (NAD(+)), catalytic subunit (300 aa).

Residues serine 20 and 44-45 (KG) contribute to the FMN site. Residues lysine 44 and 68 to 72 (NAIGL) each bind substrate. FMN contacts are provided by asparagine 98 and asparagine 125. Residue asparagine 125 participates in substrate binding. The active-site Nucleophile is the cysteine 128. FMN-binding residues include lysine 163 and isoleucine 189. 190 to 191 (NT) is a binding site for substrate. Residues glycine 215, 241-242 (GG), and 263-264 (GT) each bind FMN.

This sequence belongs to the dihydroorotate dehydrogenase family. Type 1 subfamily. As to quaternary structure, heterotetramer of 2 PyrK and 2 PyrD type B subunits. FMN serves as cofactor.

It is found in the cytoplasm. The catalysed reaction is (S)-dihydroorotate + NAD(+) = orotate + NADH + H(+). It participates in pyrimidine metabolism; UMP biosynthesis via de novo pathway; orotate from (S)-dihydroorotate (NAD(+) route): step 1/1. In terms of biological role, catalyzes the conversion of dihydroorotate to orotate with NAD(+) as electron acceptor. The protein is Dihydroorotate dehydrogenase B (NAD(+)), catalytic subunit (pyrD) of Lachnoclostridium phytofermentans (strain ATCC 700394 / DSM 18823 / ISDg) (Clostridium phytofermentans).